The chain runs to 422 residues: Serine hydroxymethyltransferase (422 aa).

(6S)-5,6,7,8-tetrahydrofolate is bound at residue 121 to 123 (GHI). Position 227 is an N6-(pyridoxal phosphate)lysine (lysine 227). Residue glutamate 245 coordinates (6S)-5,6,7,8-tetrahydrofolate.

The protein belongs to the SHMT family. In terms of assembly, homodimer. Pyridoxal 5'-phosphate is required as a cofactor.

It localises to the cytoplasm. The enzyme catalyses 5,10-methylenetetrahydromethanopterin + glycine + H2O = 5,6,7,8-tetrahydromethanopterin + L-serine. It functions in the pathway amino-acid biosynthesis; glycine biosynthesis; glycine from L-serine: step 1/1. Catalyzes the reversible interconversion of serine and glycine with tetrahydromethanopterin (H4MPT) serving as the one-carbon carrier. Also exhibits a pteridine-independent aldolase activity toward beta-hydroxyamino acids, producing glycine and aldehydes, via a retro-aldol mechanism. In Methanobrevibacter smithii (strain ATCC 35061 / DSM 861 / OCM 144 / PS), this protein is Serine hydroxymethyltransferase.